Here is a 486-residue protein sequence, read N- to C-terminus: Membrane-bound lytic murein transglycosylase F (486 aa).

Positions 1–21 (MTRIKLNYFVIGVVALLLALA) are cleaved as a signal peptide. The interval 22–268 (LWPNIPWRNG…RLEEKYLGHV (247 aa)) is non-LT domain. The tract at residues 269-486 (GSFDYVDTKT…VVGPGWSINN (218 aa)) is LT domain. Residue Glu313 is part of the active site.

The protein in the N-terminal section; belongs to the bacterial solute-binding protein 3 family. This sequence in the C-terminal section; belongs to the transglycosylase Slt family.

The protein localises to the cell outer membrane. The catalysed reaction is Exolytic cleavage of the (1-&gt;4)-beta-glycosidic linkage between N-acetylmuramic acid (MurNAc) and N-acetylglucosamine (GlcNAc) residues in peptidoglycan, from either the reducing or the non-reducing ends of the peptidoglycan chains, with concomitant formation of a 1,6-anhydrobond in the MurNAc residue.. In terms of biological role, murein-degrading enzyme that degrades murein glycan strands and insoluble, high-molecular weight murein sacculi, with the concomitant formation of a 1,6-anhydromuramoyl product. Lytic transglycosylases (LTs) play an integral role in the metabolism of the peptidoglycan (PG) sacculus. Their lytic action creates space within the PG sacculus to allow for its expansion as well as for the insertion of various structures such as secretion systems and flagella. This chain is Membrane-bound lytic murein transglycosylase F, found in Yersinia enterocolitica serotype O:8 / biotype 1B (strain NCTC 13174 / 8081).